The chain runs to 120 residues: UPF0231 protein YacL (120 aa).

The protein belongs to the UPF0231 family.

In Escherichia coli O6:K15:H31 (strain 536 / UPEC), this protein is UPF0231 protein YacL.